Here is a 350-residue protein sequence, read N- to C-terminus: Chlorophyll a/b light-harvesting protein PcbA (350 aa).

6 consecutive transmembrane segments (helical) span residues 26–46 (LSAHIAQYALITFWAGGITLF), 62–82 (LILIPHLATLGWGIGSGGQVV), 87–107 (YFVIGVIHLVASAVFGAGALY), 214–234 (IAVVLLAGGFWHINQAPFPWA), 248–268 (LSASLAGLSMAGFAAAYFSAV), and 309–329 (LCNVHFFLAFFVLQGHLWHAL).

This sequence belongs to the PsbB/PsbC family. IsiA/Pcb subfamily. In terms of assembly, the antenna complex consists of chlorophylls (a and b) and chlorophyll a/b binding proteins. Chlorophyll a is required as a cofactor. Requires chlorophyll b as cofactor.

Its subcellular location is the cellular thylakoid membrane. Functionally, the antenna complex functions as a light receptor, it captures and delivers excitation energy to photosystems II and I. The Prochlorales pcb genes are not related to higher plant LHCs. This chain is Chlorophyll a/b light-harvesting protein PcbA (pcbA), found in Prochlorothrix hollandica.